We begin with the raw amino-acid sequence, 96 residues long: Integration host factor subunit beta (96 aa).

Belongs to the bacterial histone-like protein family. As to quaternary structure, heterodimer of an alpha and a beta chain.

This protein is one of the two subunits of integration host factor, a specific DNA-binding protein that functions in genetic recombination as well as in transcriptional and translational control. The sequence is that of Integration host factor subunit beta from Photobacterium profundum (strain SS9).